The sequence spans 564 residues: Quinone-dependent D-lactate dehydrogenase (564 aa).

Residues 36–207 (GTGNALAVVR…TNLQEKRYQV (172 aa)) enclose the FAD-binding PCMH-type domain. Residues 70 to 74 (AANTG), 78 to 79 (GS), G137, S144, G154, and V256 contribute to the FAD site.

The protein belongs to the quinone-dependent D-lactate dehydrogenase family. FAD is required as a cofactor.

The protein localises to the cell inner membrane. It carries out the reaction (R)-lactate + a quinone = a quinol + pyruvate. In terms of biological role, catalyzes the oxidation of D-lactate to pyruvate. This chain is Quinone-dependent D-lactate dehydrogenase, found in Haemophilus influenzae (strain ATCC 51907 / DSM 11121 / KW20 / Rd).